The sequence spans 596 residues: Thioredoxin reductase 1, mitochondrial (596 aa).

The segment at 59-87 is disordered; that stretch reads LTGQRGSRDSTGATGGNAPAGSGAGAPPP. The span at 68 to 79 shows a compositional bias: low complexity; that stretch reads STGATGGNAPAG. Residues 120–126, 143–147, 159–170, 233–235, 262–266, S282, F286, and Y302 contribute to the FAD site; these read IGGGSAG, LDFVK, GGTCVNVGCIPK, GLG, and AVGGR. A disulfide bond links C162 and C167. NADP(+) contacts are provided by residues 322–328 and P355; that span reads VRSIVLR. FAD is bound by residues 392–399, 429–432, 438–443, and F472; these read RKGLVDDL, VGDI, and ELTPVA. Residue H569 is the Proton acceptor of the active site. P570 serves as a coordination point for FAD. A disulfide bond links C594 and C595.

This sequence belongs to the class-I pyridine nucleotide-disulfide oxidoreductase family. Homodimer. The cofactor is FAD. During embryogenesis, expression is seen in germ cell progenitors, developing midgut, hindgut and proventriculus.

Its subcellular location is the mitochondrion. The protein resides in the cytoplasm. It catalyses the reaction [thioredoxin]-dithiol + NADP(+) = [thioredoxin]-disulfide + NADPH + H(+). Its function is as follows. Thioredoxin system is a major player in glutathione metabolism, due to the demonstrated absence of a glutathione reductase. Functionally interacts with the Sod/Cat reactive oxidation species (ROS) defense system and thereby has a role in preadult development and life span. Lack of a glutathione reductase suggests antioxidant defense in Drosophila, and probably in related insects, differs fundamentally from that in other organisms. This is Thioredoxin reductase 1, mitochondrial from Drosophila melanogaster (Fruit fly).